Reading from the N-terminus, the 272-residue chain is Eukaryotic translation initiation factor 3 subunit G (272 aa).

2 disordered regions span residues 1-28 and 157-188; these read MPALDEIKSSWADEVELDSGSLPPPTEI and APTTAKSGKYVPPSMRDSQKPGMGGNPRGRDD. One can recognise an RRM domain in the interval 190-268; the sequence is TAIRISNLSE…LILNVEWSKP (79 aa).

The protein belongs to the eIF-3 subunit G family. In terms of assembly, component of the eukaryotic translation initiation factor 3 (eIF-3) complex.

It localises to the cytoplasm. Functionally, RNA-binding component of the eukaryotic translation initiation factor 3 (eIF-3) complex, which is involved in protein synthesis of a specialized repertoire of mRNAs and, together with other initiation factors, stimulates binding of mRNA and methionyl-tRNAi to the 40S ribosome. The eIF-3 complex specifically targets and initiates translation of a subset of mRNAs involved in cell proliferation. This subunit can bind 18S rRNA. The protein is Eukaryotic translation initiation factor 3 subunit G of Aedes aegypti (Yellowfever mosquito).